Reading from the N-terminus, the 444-residue chain is Orexin receptor type 2 (444 aa).

Residues 1–10 (MSGTKLEDSP) show a composition bias toward basic and acidic residues. The disordered stretch occupies residues 1-30 (MSGTKLEDSPPCRNWSSAPELNETQEPFLN). Residues 1–54 (MSGTKLEDSPPCRNWSSAPELNETQEPFLNPTDYDDEEFLRYLWREYLHPKEYE) are Extracellular-facing. N-linked (GlcNAc...) asparagine glycans are attached at residues asparagine 14 and asparagine 22. Residues 14–27 (NWSSAPELNETQEP) show a composition bias toward polar residues. Residues 33-49 (DYDDEEFLRYLWREYLH) are required for response to orexin-A. A helical membrane pass occupies residues 55–75 (WVLIAGYIIVFVVALVGNVLV). Residues 76-88 (CVAVWKNHHMRTV) are Cytoplasmic-facing. Residues 89 to 110 (TNYFIVNLSLADVLVTITCLPA) traverse the membrane as a helical segment. Over 111 to 127 (TLVVDITETWFFGQSLC) the chain is Extracellular. Cysteines 127 and 210 form a disulfide. The helical transmembrane segment at 128-150 (KVIPYLQTVSVSVSVLTLSCIAL) threads the bilayer. Residues 151–170 (DRWYAICHPLMFKSTAKRAR) are Cytoplasmic-facing. The helical transmembrane segment at 171-191 (NSIVIIWIVSCIIMIPQAIVM) threads the bilayer. At 192 to 222 (ECSTMLPGLANKTTLFTVCDERWGGEIYPKM) the chain is on the extracellular side. The N-linked (GlcNAc...) asparagine glycan is linked to asparagine 202. A helical membrane pass occupies residues 223-243 (YHICFFLVTYMAPLCLMVLAY). At 244–304 (LQIFRKLWCR…QIRARRKTAR (61 aa)) the chain is on the cytoplasmic side. Residues 305–326 (MLMVVLLVFAICYLPISILNVL) traverse the membrane as a helical segment. The Extracellular portion of the chain corresponds to 327-342 (KRVFGMFTHTEDRETV). The chain crosses the membrane as a helical span at residues 343–366 (YAWFTFSHWLVYANSAANPIIYNF). Residues 367-444 (LSGKFREEFK…ANGAGPLQNW (78 aa)) lie on the Cytoplasmic side of the membrane.

It belongs to the G-protein coupled receptor 1 family.

The protein localises to the cell membrane. Its function is as follows. Nonselective, high-affinity receptor for both orexin-A and orexin-B neuropeptides. Triggers an increase in cytoplasmic Ca(2+) levels in response to orexin-A binding. This is Orexin receptor type 2 (HCRTR2) from Canis lupus familiaris (Dog).